A 72-amino-acid polypeptide reads, in one-letter code: Protein kish-A (72 aa).

The signal sequence occupies residues 1–26 (MSAIFNFQSLLTVILLLICTCAYIRS). Over 27–53 (LAPSILDRNKTGLLGIFWKCARIGERK) the chain is Extracellular. N-linked (GlcNAc...) asparagine glycosylation occurs at Asn-35. Residues 54–71 (SPYVAICCIVMAFSILFI) form a helical membrane-spanning segment. Residue Gln-72 is a topological domain, cytoplasmic.

The protein belongs to the KISH family.

Its subcellular location is the golgi apparatus membrane. In terms of biological role, involved in the early part of the secretory pathway. In Mus musculus (Mouse), this protein is Protein kish-A (Tmem167a).